Consider the following 307-residue polypeptide: Olfactory receptor 5AC1 (307 aa).

Over 1–28 (MAEENKILVTHFVLTGLTDHPGLQAPLF) the chain is Extracellular. A helical membrane pass occupies residues 29–49 (LVFLVIYLITLVGNLGLMALI). At 50–56 (WKDPHLH) the chain is on the cytoplasmic side. A helical transmembrane segment spans residues 57–77 (TPIYLFLGSLAFADACTSSSV). Over 78–99 (TSKMLINFLSKNHMLSMAKCAT) the chain is Extracellular. Cys97 and Cys179 form a disulfide bridge. The helical transmembrane segment at 100 to 120 (QFYFFGSNATTECFLLVVMAY) threads the bilayer. The Cytoplasmic portion of the chain corresponds to 121–143 (DRYVAICNPLLYPVVMSNSLCTQ). Residues 144–164 (FIGISYFIGFLHSAIHVGLLF) traverse the membrane as a helical segment. Residues 165–195 (RLTFCRSNIIHYFYCEILQLFKISCTNPTVN) lie on the Extracellular side of the membrane. A helical transmembrane segment spans residues 196 to 216 (ILLIFIFSAFIQVFTFMTLIV). At 217 to 239 (SYSYILSAILKKKSEKGRSKAFS) the chain is on the cytoplasmic side. Residues 240–260 (TCSAHLLSVSLFYGTLFFMYV) form a helical membrane-spanning segment. The Extracellular portion of the chain corresponds to 261 to 271 (SSRSGSAADQA). A helical membrane pass occupies residues 272–292 (KMYSLFYTIIIPLLNPFIYSL). Residues 293–307 (RNKEVIDALRRIMKK) are Cytoplasmic-facing.

It belongs to the G-protein coupled receptor 1 family.

It is found in the cell membrane. In terms of biological role, odorant receptor. The protein is Olfactory receptor 5AC1 (OR5AC1) of Homo sapiens (Human).